A 255-amino-acid chain; its full sequence is Ribonuclease HII (255 aa).

Residues 70–255 (EYIAGVDEVG…FEPVKKILLK (186 aa)) enclose the RNase H type-2 domain. A divalent metal cation contacts are provided by Asp76, Glu77, and Asp168.

It belongs to the RNase HII family. The cofactor is Mn(2+). Requires Mg(2+) as cofactor.

The protein resides in the cytoplasm. It catalyses the reaction Endonucleolytic cleavage to 5'-phosphomonoester.. In terms of biological role, endonuclease that specifically degrades the RNA of RNA-DNA hybrids. The polypeptide is Ribonuclease HII (Ligilactobacillus salivarius (strain UCC118) (Lactobacillus salivarius)).